The primary structure comprises 685 residues: Putative alpha-1,3-mannosyltransferase MNN14 (685 aa).

Over methionine 1 to lysine 13 the chain is Cytoplasmic. Residues leucine 14–serine 34 traverse the membrane as a helical segment. The Lumenal segment spans residues glutamine 35–leucine 685. Residues asparagine 199, asparagine 338, asparagine 408, and asparagine 556 are each glycosylated (N-linked (GlcNAc...) asparagine).

It belongs to the MNN1/MNT family.

Its subcellular location is the golgi apparatus membrane. Its pathway is protein modification; protein glycosylation. In terms of biological role, responsible for addition of the terminal mannose residues to the outer chain of core N-linked polysaccharides and to O-linked mannotriose. Implicated in late Golgi modifications. Involved in virulence. In Candida albicans (strain SC5314 / ATCC MYA-2876) (Yeast), this protein is Putative alpha-1,3-mannosyltransferase MNN14 (MNN14).